The chain runs to 127 residues: UPF0325 protein VIBHAR_03240 (127 aa).

Belongs to the UPF0325 family.

This is UPF0325 protein VIBHAR_03240 from Vibrio campbellii (strain ATCC BAA-1116).